A 298-amino-acid polypeptide reads, in one-letter code: tRNA pseudouridine synthase B (298 aa).

Residue Asp46 is the Nucleophile of the active site.

It belongs to the pseudouridine synthase TruB family. Type 1 subfamily.

It catalyses the reaction uridine(55) in tRNA = pseudouridine(55) in tRNA. In terms of biological role, responsible for synthesis of pseudouridine from uracil-55 in the psi GC loop of transfer RNAs. In Paracoccus denitrificans (strain Pd 1222), this protein is tRNA pseudouridine synthase B.